Here is a 229-residue protein sequence, read N- to C-terminus: Protein N-lysine methyltransferase METTL21D (229 aa).

Ala-2 bears the N-acetylalanine mark. Ser-8 is subject to Phosphoserine. S-adenosyl-L-methionine-binding positions include Trp-43, 75–77, Asp-96, Trp-126, Ala-143, and Tyr-148; that span reads GSG.

Belongs to the methyltransferase superfamily. METTL21 family. As to quaternary structure, interacts with ALKBH6. Interacts with ASPSCR1 and UBXN6; interaction with ASPSCR1, but not with UBXN6, enhances VCP methylation.

Its subcellular location is the cytoplasm. The catalysed reaction is L-lysyl-[protein] + 3 S-adenosyl-L-methionine = N(6),N(6),N(6)-trimethyl-L-lysyl-[protein] + 3 S-adenosyl-L-homocysteine + 3 H(+). In terms of biological role, protein N-lysine methyltransferase that specifically trimethylates 'Lys-315' of VCP/p97; this modification may decrease VCP ATPase activity. The protein is Protein N-lysine methyltransferase METTL21D (VCPKMT) of Homo sapiens (Human).